Consider the following 533-residue polypeptide: Solute carrier family 2, facilitated glucose transporter member 2 (533 aa).

The Cytoplasmic segment spans residues 1-17 (MDGKSKMQAEKHLTGTL). Residues 18 to 38 (VLSVFTAVLGFFQYGYSLGVI) traverse the membrane as a helical segment. Residues 39–110 (NAPQKVIEAH…SPHILTMYWS (72 aa)) lie on the Extracellular side of the membrane. N-linked (GlcNAc...) asparagine glycosylation is found at Asn64 and Asn69. The chain crosses the membrane as a helical span at residues 111–131 (LSVSMFAVGGMVSSFTVGWIG). Residues 132-136 (DRLGR) are Cytoplasmic-facing. A helical transmembrane segment spans residues 137 to 157 (VKAMLVVNVLSIAGNLLMGLA). Residues 158–163 (KMGPSH) are Extracellular-facing. A helical membrane pass occupies residues 164–184 (ILIIAGRAITGLYCGLSSGLV). Residues 185–199 (PMYVSEVSPTALRGA) lie on the Cytoplasmic side of the membrane. The helical transmembrane segment at 200–220 (LGTLHQLAIVTGILISQVLGL) threads the bilayer. Residue Gln205 coordinates D-glucose. The Extracellular portion of the chain corresponds to 221–229 (DFLLGNDEL). A helical membrane pass occupies residues 230–250 (WPLLLGLSGVAALLQFFLLLL). Over 251–315 (CPESPRYLYI…LFSSSKYRQA (65 aa)) the chain is Cytoplasmic. The chain crosses the membrane as a helical span at residues 316–336 (VIVALMVQISQQFSGINAIFY). D-glucose is bound by residues 326 to 327 (QQ) and Asn332. Topologically, residues 337-350 (YSTNIFQRAGVGQP) are extracellular. The helical transmembrane segment at 351-371 (VYATIGVGVVNTVFTVISVFL) threads the bilayer. Residue Asn361 participates in D-glucose binding. The Cytoplasmic portion of the chain corresponds to 372–379 (VEKAGRRS). The helical transmembrane segment at 380-400 (LFLAGLMGMLISAVAMTVGLV) threads the bilayer. The Extracellular portion of the chain corresponds to 401–413 (LLSQFAWMSYVSM). Residues 414–434 (VAIFLFVIFFEVGPGPIPWFI) form a helical membrane-spanning segment. The D-glucose site is built by Glu424 and Trp432. At 435 to 445 (VAELFSQGPRP) the chain is on the cytoplasmic side. The helical transmembrane segment at 446-466 (AAIAVAGFCNWACNFIVGMCF) threads the bilayer. At 467–471 (QYIAD) the chain is on the extracellular side. The chain crosses the membrane as a helical span at residues 472 to 492 (LCGPYVFVVFAVLLLVFFLFA). At 493–533 (YLKVPETKGKSFEEIAAAFRRKKLPAKSMTELEDLRGGEEA) the chain is on the cytoplasmic side.

The protein belongs to the major facilitator superfamily. Sugar transporter (TC 2.A.1.1) family. Glucose transporter subfamily.

The protein resides in the cell membrane. It catalyses the reaction D-glucose(out) = D-glucose(in). The catalysed reaction is D-fructose(out) = D-fructose(in). The enzyme catalyses L-dehydroascorbate(out) = L-dehydroascorbate(in). It carries out the reaction D-galactose(in) = D-galactose(out). With respect to regulation, D-glucose and maltose competitively inhibit fructose transport. D-glucose, D-fructose and maltose inhibit deoxyglucose transport. Facilitative hexose transporter that mediates the transport of glucose, fructose and galactose. Likely mediates the bidirectional transfer of glucose across the plasma membrane of hepatocytes and is responsible for uptake of glucose by the beta cells. The sequence is that of Solute carrier family 2, facilitated glucose transporter member 2 from Gallus gallus (Chicken).